Here is a 452-residue protein sequence, read N- to C-terminus: Ethanolamine kinase 1 (452 aa).

Residues 26-64 (AVQTRIGNSAASRRSPAARPPVPAPPALPRGRPGTEGST) form a disordered region. Residues 43–53 (ARPPVPAPPAL) show a composition bias toward pro residues.

It belongs to the choline/ethanolamine kinase family. Expressed in kidney, liver, placenta, heart, leukocyte, ovary and testis.

The protein localises to the cytoplasm. It carries out the reaction ethanolamine + ATP = phosphoethanolamine + ADP + H(+). It participates in phospholipid metabolism; phosphatidylethanolamine biosynthesis; phosphatidylethanolamine from ethanolamine: step 1/3. Its function is as follows. Highly specific for ethanolamine phosphorylation. May be a rate-controlling step in phosphatidylethanolamine biosynthesis. The chain is Ethanolamine kinase 1 from Homo sapiens (Human).